The chain runs to 564 residues: Oxalyl-CoA decarboxylase (564 aa).

Residues I32 and Y118 each coordinate substrate. R158 and K220 together coordinate ADP. Position 261–265 (261–265) interacts with substrate; that stretch reads AAARS. Residues R280, D302, and I322 each contribute to the ADP site. N355 is a binding site for substrate. Thiamine diphosphate is bound by residues Y372 and 396–398; that span reads ANT. Substrate is bound at residue 403-404; that stretch reads RN. 421-423 is a thiamine diphosphate binding site; it reads GVM. Residue D447 coordinates Mg(2+). 448–449 provides a ligand contact to thiamine diphosphate; sequence SA. Mg(2+) contacts are provided by N474 and G476. Y478 contributes to the thiamine diphosphate binding site. Residue 550-552 coordinates substrate; the sequence is SGH.

The protein belongs to the TPP enzyme family. Homotetramer; dimer of dimers. Mg(2+) is required as a cofactor. Thiamine diphosphate serves as cofactor.

The catalysed reaction is oxalyl-CoA + H(+) = formyl-CoA + CO2. The protein operates within metabolic intermediate degradation; oxalate degradation; CO(2) and formate from oxalate: step 2/2. Involved in the catabolism of oxalate and in the adapatation to low pH via the induction of the oxalate-dependent acid tolerance response (ATR). Catalyzes the decarboxylation of oxalyl-CoA to yield carbon dioxide and formyl-CoA. The protein is Oxalyl-CoA decarboxylase (oxc) of Escherichia coli O157:H7.